The primary structure comprises 170 residues: RNA pyrophosphohydrolase (170 aa).

A Nudix hydrolase domain is found at G6–K149. The short motif at G38–G59 is the Nudix box element.

It belongs to the Nudix hydrolase family. RppH subfamily. A divalent metal cation is required as a cofactor.

Functionally, accelerates the degradation of transcripts by removing pyrophosphate from the 5'-end of triphosphorylated RNA, leading to a more labile monophosphorylated state that can stimulate subsequent ribonuclease cleavage. The chain is RNA pyrophosphohydrolase from Aliivibrio fischeri (strain ATCC 700601 / ES114) (Vibrio fischeri).